Reading from the N-terminus, the 324-residue chain is Cuticle collagen lon-3 (324 aa).

An N-terminal signal peptide occupies residues 1 to 30 (MSVTTATSGALIFSGASLLVSLFAAASIYS). Residues 119–324 (VENTCPTGPD…AWRRKHKRVY (206 aa)) are disordered. Triple-helical region regions lie at residues 129 to 152 (GEEGEQGPDGQDGVDGVPGFDGQD), 170 to 229 (GLPG…KGDD), and 235 to 294 (GRQG…SGLP). 5 stretches are compositionally biased toward low complexity: residues 136–151 (PDGQDGVDGVPGFDGQ), 168–181 (PQGLPGPQGSQGAP), 210–223 (PTGAPGDDGAPGAS), 235–246 (GRQGQRGQPGEQ), and 261–273 (EGPPGVEGEVGVP). The segment covering 296–311 (KDAEYCKCPTRDDGGN) has biased composition (basic and acidic residues). The span at 314-324 (RAWRRKHKRVY) shows a compositional bias: basic residues.

Belongs to the cuticular collagen family. Collagen polypeptide chains are complexed within the cuticle by disulfide bonds and other types of covalent cross-links.

Nematode cuticles are composed largely of collagen-like proteins. The cuticle functions both as an exoskeleton and as a barrier to protect the worm from its environment. Dose-dependent regulator of body length and shape. This chain is Cuticle collagen lon-3 (lon-3), found in Caenorhabditis elegans.